The primary structure comprises 364 residues: Suberization-associated anionic peroxidase 1 (364 aa).

The N-terminal stretch at 1-25 (MGFRLSHLSLALSFVALALAGVAIY) is a signal peptide. Asn-36 is a glycosylation site (N-linked (GlcNAc...) asparagine). 2 cysteine pairs are disulfide-bonded: Cys-81–Cys-160 and Cys-112–Cys-117. Catalysis depends on His-110, which acts as the Proton acceptor. Asp-111, Val-114, Gly-116, and Asp-118 together coordinate Ca(2+). Residues Asn-127, Asn-162, and Asn-200 are each glycosylated (N-linked (GlcNAc...) asparagine). Disulfide bonds link Cys-167–Cys-353 and Cys-246–Cys-265. Residue Pro-209 coordinates substrate. 2 N-linked (GlcNAc...) asparagine glycosylation sites follow: Asn-214 and Asn-226. His-239 is a heme b binding site. Residue Thr-240 coordinates Ca(2+). Asn-264 is a glycosylation site (N-linked (GlcNAc...) asparagine). Ca(2+) is bound by residues Asp-278, Thr-280, and Asp-285.

Belongs to the peroxidase family. Classical plant (class III) peroxidase subfamily. The cofactor is Ca(2+). Heme b serves as cofactor.

It localises to the secreted. It carries out the reaction 2 a phenolic donor + H2O2 = 2 a phenolic radical donor + 2 H2O. Functionally, removal of H(2)O(2), oxidation of toxic reductants, biosynthesis and degradation of lignin, suberization, auxin catabolism, response to environmental stresses such as wounding, pathogen attack and oxidative stress. These functions might be dependent on each isozyme/isoform in each plant tissue. Its function is as follows. Suggested to catalyze the deposition of the aromatic residues of suberin on the cell wall and thus play a role in cell-suberization. This Solanum lycopersicum (Tomato) protein is Suberization-associated anionic peroxidase 1 (TAP1).